Consider the following 437-residue polypeptide: Histidine--tRNA ligase (437 aa).

It belongs to the class-II aminoacyl-tRNA synthetase family. In terms of assembly, homodimer.

The protein localises to the cytoplasm. It carries out the reaction tRNA(His) + L-histidine + ATP = L-histidyl-tRNA(His) + AMP + diphosphate + H(+). This Leptospira biflexa serovar Patoc (strain Patoc 1 / Ames) protein is Histidine--tRNA ligase.